The primary structure comprises 118 residues: Protein YLR162W (118 aa).

Residues 1–20 (MQHTLTRTASLPERSSSAHS) are compositionally biased toward polar residues. The tract at residues 1–26 (MQHTLTRTASLPERSSSAHSAATALP) is disordered. A helical transmembrane segment spans residues 38–58 (LVPLLCIFWFVFVSMSPLPPA).

The protein resides in the membrane. Its function is as follows. Overexpression confers resistance to the antimicrobial peptide MiAMP1. The chain is Protein YLR162W from Saccharomyces cerevisiae (strain ATCC 204508 / S288c) (Baker's yeast).